Consider the following 269-residue polypeptide: 4-hydroxy-tetrahydrodipicolinate reductase (269 aa).

NAD(+) contacts are provided by residues 13-18 and D39; that span reads GASGRM. R40 lines the NADP(+) pocket. Residues 101–103 and 125–128 each bind NAD(+); these read GTT and APNM. H158 functions as the Proton donor/acceptor in the catalytic mechanism. Residue H159 coordinates (S)-2,3,4,5-tetrahydrodipicolinate. K162 acts as the Proton donor in catalysis. 168 to 169 is a (S)-2,3,4,5-tetrahydrodipicolinate binding site; it reads GT.

Belongs to the DapB family.

Its subcellular location is the cytoplasm. The catalysed reaction is (S)-2,3,4,5-tetrahydrodipicolinate + NAD(+) + H2O = (2S,4S)-4-hydroxy-2,3,4,5-tetrahydrodipicolinate + NADH + H(+). It catalyses the reaction (S)-2,3,4,5-tetrahydrodipicolinate + NADP(+) + H2O = (2S,4S)-4-hydroxy-2,3,4,5-tetrahydrodipicolinate + NADPH + H(+). Its pathway is amino-acid biosynthesis; L-lysine biosynthesis via DAP pathway; (S)-tetrahydrodipicolinate from L-aspartate: step 4/4. In terms of biological role, catalyzes the conversion of 4-hydroxy-tetrahydrodipicolinate (HTPA) to tetrahydrodipicolinate. This chain is 4-hydroxy-tetrahydrodipicolinate reductase, found in Bordetella pertussis (strain Tohama I / ATCC BAA-589 / NCTC 13251).